A 109-amino-acid polypeptide reads, in one-letter code: Large ribosomal subunit protein uL22 (109 aa).

Belongs to the universal ribosomal protein uL22 family. In terms of assembly, part of the 50S ribosomal subunit.

Its function is as follows. This protein binds specifically to 23S rRNA; its binding is stimulated by other ribosomal proteins, e.g. L4, L17, and L20. It is important during the early stages of 50S assembly. It makes multiple contacts with different domains of the 23S rRNA in the assembled 50S subunit and ribosome. The globular domain of the protein is located near the polypeptide exit tunnel on the outside of the subunit, while an extended beta-hairpin is found that lines the wall of the exit tunnel in the center of the 70S ribosome. This Wolinella succinogenes (strain ATCC 29543 / DSM 1740 / CCUG 13145 / JCM 31913 / LMG 7466 / NCTC 11488 / FDC 602W) (Vibrio succinogenes) protein is Large ribosomal subunit protein uL22.